Reading from the N-terminus, the 194-residue chain is ATP-dependent Clp protease proteolytic subunit 4 (194 aa).

Catalysis depends on S100, which acts as the Nucleophile. Residue H125 is part of the active site.

It belongs to the peptidase S14 family. In terms of assembly, fourteen ClpP subunits assemble into 2 heptameric rings which stack back to back to give a disk-like structure with a central cavity, resembling the structure of eukaryotic proteasomes.

It localises to the cytoplasm. The enzyme catalyses Hydrolysis of proteins to small peptides in the presence of ATP and magnesium. alpha-casein is the usual test substrate. In the absence of ATP, only oligopeptides shorter than five residues are hydrolyzed (such as succinyl-Leu-Tyr-|-NHMec, and Leu-Tyr-Leu-|-Tyr-Trp, in which cleavage of the -Tyr-|-Leu- and -Tyr-|-Trp bonds also occurs).. Its function is as follows. Cleaves peptides in various proteins in a process that requires ATP hydrolysis. Has a chymotrypsin-like activity. Plays a major role in the degradation of misfolded proteins. The chain is ATP-dependent Clp protease proteolytic subunit 4 from Rhodococcus jostii (strain RHA1).